Reading from the N-terminus, the 357-residue chain is BLOC-1-related complex subunit 6 (357 aa).

The tract at residues 20-196 (HQALVFGGGP…SGAGGGRRAT (177 aa)) is disordered. Over residues 90–99 (GAGSRRGAPG) the composition is skewed to low complexity. Over residues 138–149 (EQQEEEDNDEEA) the composition is skewed to acidic residues. Positions 150–162 (AAGSRAGRSFSSR) are enriched in low complexity. Phosphoserine is present on Ser168. Residue Thr196 is modified to Phosphothreonine. The residue at position 199 (Ser199) is a Phosphoserine. The segment at 227 to 256 (LSGAPPPPPSAPARPCPAPAPTPTPAIPPI) is disordered. Pro residues predominate over residues 230–256 (APPPPPSAPARPCPAPAPTPTPAIPPI).

It belongs to the BORCS6 family. As to quaternary structure, component of the BLOC-one-related complex (BORC) which is composed of BLOC1S1, BLOC1S2, BORCS5, BORCS6, BORCS7, BORCS8, KXD1 and SNAPIN.

The protein localises to the lysosome membrane. As part of the BORC complex may play a role in lysosomes movement and localization at the cell periphery. Associated with the cytosolic face of lysosomes, the BORC complex may recruit ARL8B and couple lysosomes to microtubule plus-end-directed kinesin motor. The sequence is that of BLOC-1-related complex subunit 6 from Homo sapiens (Human).